The sequence spans 179 residues: ADP-ribosylation factor-like protein 5A (179 aa).

Glycine 2 carries N-myristoyl glycine lipidation. GTP-binding positions include 23–30, 66–70, 125–128, and alanine 159; these read GLDNAGKT, DIGGQ, and NKQD.

This sequence belongs to the small GTPase superfamily. Arf family.

Its function is as follows. Lacks ADP-ribosylation enhancing activity. In Bos taurus (Bovine), this protein is ADP-ribosylation factor-like protein 5A (ARL5A).